The primary structure comprises 24 residues: Major pollen allergen Ole e 4 (24 aa).

It belongs to the glycosyl hydrolase 17 family. In terms of processing, the N-terminus is blocked.

This is Major pollen allergen Ole e 4 from Olea europaea (Common olive).